Here is a 426-residue protein sequence, read N- to C-terminus: Protein arginine N-methyltransferase 2 (426 aa).

2 disordered regions span residues 65–88 (DEEE…GQES) and 155–175 (DEEM…AVAA). A compositionally biased stretch (polar residues) spans 73-88 (NGVQTNGDRQTHGQES). A compositionally biased stretch (acidic residues) spans 155-168 (DEEMEEDGEQEQEQ). The region spanning 207 to 426 (PSVTSSRYLN…YRLPLCKYMD (220 aa)) is the RMT2 domain. S-adenosyl-L-methionine contacts are provided by residues Tyr214, Met243, 263 to 268 (HGMGIV), 284 to 286 (EAH), 311 to 312 (WQ), and Asp331.

The protein belongs to the class I-like SAM-binding methyltransferase superfamily. RMT2 methyltransferase family. In terms of assembly, monomer.

Its subcellular location is the cytoplasm. It localises to the nucleus. Functionally, S-adenosyl-L-methionine-dependent protein-arginine N-methyltransferase that methylates the delta-nitrogen atom of arginine residues to form N5-methylarginine (type IV) in target proteins. Monomethylates ribosomal protein L12. The chain is Protein arginine N-methyltransferase 2 from Emericella nidulans (strain FGSC A4 / ATCC 38163 / CBS 112.46 / NRRL 194 / M139) (Aspergillus nidulans).